The primary structure comprises 295 residues: uncharacterized protein (295 aa).

NAD(+)-binding positions include 11-25 and threonine 101; that span reads GYIG…MAKR. Lysine 176 is an active-site residue. Residue lysine 252 coordinates NAD(+).

Belongs to the HIBADH-related family.

This is an uncharacterized protein from Mycobacterium tuberculosis (strain CDC 1551 / Oshkosh).